A 586-amino-acid polypeptide reads, in one-letter code: Alpha-1,2-mannosyltransferase MNN5 (586 aa).

Residues methionine 1–asparagine 29 form the signal peptide. Asparagine 113, asparagine 136, asparagine 259, and asparagine 264 each carry an N-linked (GlcNAc...) asparagine glycan.

The protein belongs to the MNN1/MNT family. In terms of assembly, interacts with SVP26. Glycosylated.

The protein localises to the golgi apparatus. It localises to the cis-Golgi network. It functions in the pathway protein modification; protein glycosylation. Its function is as follows. Responsible for addition of first and second mannose residues to the outer chain of core N-linked polysaccharides and to O-linked mannotriose. Implicated in late Golgi modifications. The chain is Alpha-1,2-mannosyltransferase MNN5 (MNN5) from Saccharomyces cerevisiae (strain ATCC 204508 / S288c) (Baker's yeast).